The sequence spans 171 residues: S-ribosylhomocysteine lyase (171 aa).

Residues His54, His58, and Cys128 each contribute to the Fe cation site.

This sequence belongs to the LuxS family. In terms of assembly, homodimer. It depends on Fe cation as a cofactor.

It carries out the reaction S-(5-deoxy-D-ribos-5-yl)-L-homocysteine = (S)-4,5-dihydroxypentane-2,3-dione + L-homocysteine. Its function is as follows. Involved in the synthesis of autoinducer 2 (AI-2) which is secreted by bacteria and is used to communicate both the cell density and the metabolic potential of the environment. The regulation of gene expression in response to changes in cell density is called quorum sensing. Catalyzes the transformation of S-ribosylhomocysteine (RHC) to homocysteine (HC) and 4,5-dihydroxy-2,3-pentadione (DPD). In Klebsiella pneumoniae (strain 342), this protein is S-ribosylhomocysteine lyase.